Here is a 448-residue protein sequence, read N- to C-terminus: Cysteine--tRNA ligase (448 aa).

C27 contributes to the Zn(2+) binding site. The short motif at 29–39 (PTVYNYIHVGN) is the 'HIGH' region element. Zn(2+) contacts are provided by C210, H235, and E239. Positions 267–271 (KMSKS) match the 'KMSKS' region motif. K270 serves as a coordination point for ATP.

Belongs to the class-I aminoacyl-tRNA synthetase family. As to quaternary structure, monomer. Requires Zn(2+) as cofactor.

It is found in the cytoplasm. It catalyses the reaction tRNA(Cys) + L-cysteine + ATP = L-cysteinyl-tRNA(Cys) + AMP + diphosphate. In Lactococcus lactis subsp. cremoris (strain SK11), this protein is Cysteine--tRNA ligase.